The primary structure comprises 251 residues: Phosphomannomutase (251 aa).

Asp-18 serves as the catalytic Nucleophile. Residues Asp-18 and Asp-20 each contribute to the Mg(2+) site. The active-site Proton donor/acceptor is the Asp-20. The alpha-D-mannose 1-phosphate site is built by Arg-27, Arg-129, Arg-140, Arg-147, Ser-185, and Asp-187. Mg(2+)-binding residues include Asp-213, Phe-225, Asp-227, and Thr-230.

It belongs to the eukaryotic PMM family. In terms of assembly, homodimer. Mg(2+) serves as cofactor.

The protein localises to the cytoplasm. It carries out the reaction alpha-D-mannose 1-phosphate = D-mannose 6-phosphate. The protein operates within nucleotide-sugar biosynthesis; GDP-alpha-D-mannose biosynthesis; alpha-D-mannose 1-phosphate from D-fructose 6-phosphate: step 2/2. In terms of biological role, catalyzes the interconversion of mannose-6-phosphate to mannose-1-phosphate, the precursor for the synthesis of GDP-mannose. GDP-mannose is an essential sugar nucleotide for the synthesis of D-mannose-containing cell wall polysaccharides (galactomannans and glucomannans), glycolipids, glycoproteins and the antioxidant L-ascorbate. In Galdieria sulphuraria (Red alga), this protein is Phosphomannomutase.